A 958-amino-acid polypeptide reads, in one-letter code: UvrABC system protein A (958 aa).

In terms of domain architecture, ABC transporter 1 spans 1–232 (MQSKSIKIQG…IETALKLGEG (232 aa)). Residue 33–40 (GLSGSGKS) coordinates ATP. Residues 252-279 (CPICGFSIGELEPRLFSFNSPFGACPSC) form a C4-type zinc finger. ABC transporter domains follow at residues 315–593 (QYYP…KYLS) and 604–935 (RRKP…GKYL). 639 to 646 (GVSGSGKS) is a binding site for ATP. Residues 738–764 (CEACRGDGILKIEMHFLPDVYVPCEVC) form a C4-type zinc finger.

The protein belongs to the ABC transporter superfamily. UvrA family. In terms of assembly, forms a heterotetramer with UvrB during the search for lesions.

The protein localises to the cytoplasm. Functionally, the UvrABC repair system catalyzes the recognition and processing of DNA lesions. UvrA is an ATPase and a DNA-binding protein. A damage recognition complex composed of 2 UvrA and 2 UvrB subunits scans DNA for abnormalities. When the presence of a lesion has been verified by UvrB, the UvrA molecules dissociate. The protein is UvrABC system protein A of Oceanobacillus iheyensis (strain DSM 14371 / CIP 107618 / JCM 11309 / KCTC 3954 / HTE831).